A 475-amino-acid polypeptide reads, in one-letter code: Methylenomycin A resistance protein (475 aa).

14 consecutive transmembrane segments (helical) span residues 28–48, 65–85, 93–113, 123–143, 152–172, 173–193, 212–232, 240–260, 285–305, 314–334, 346–366, 371–391, 416–436, and 439–459; these read ITALATGFVMATLDVTVVNVA, WIVDGYVLTFASLLMLAGGLA, VYLWGMGVFFLASLACALAPT, VQGAGAALFMPSSLSLLVFSF, MLGLWSAIVATSSGLGPTVGG, LMVSAFGWESIFLLNLPIGAI, LAVPGHLLWIVALAAVSFALI, TAGPVLTAYAVAVTAAALLAL, LVGFLFNFALFGSTFMLGLYF, FQAGLELLPMTIFFPVANIVY, LLTAFLLLAGAASLSMVTITA, WVVAVAVGVANIGAGIISPGM, QIGSLVGIAAMGVVLHSTSDW, and GAAISFLAVGLAYLLGGLSAW.

This sequence belongs to the major facilitator superfamily.

The protein resides in the cell membrane. Its function is as follows. Resistance to the epoxide antibiotic methylenomycin A; probably by mediating its efflux. This Streptomyces coelicolor (strain ATCC BAA-471 / A3(2) / M145) protein is Methylenomycin A resistance protein (mmr).